Reading from the N-terminus, the 374-residue chain is Alcohol dehydrogenase class-3 (374 aa).

An N-acetylalanine modification is found at alanine 2. Zn(2+) contacts are provided by cysteine 45, histidine 67, cysteine 97, cysteine 100, cysteine 103, cysteine 111, and cysteine 174. Lysine 233 is modified (N6-succinyllysine). Residue serine 247 is modified to Phosphoserine. Lysine 315 carries the N6-succinyllysine modification. Residues serine 324 and serine 351 each carry the phosphoserine modification.

The protein belongs to the zinc-containing alcohol dehydrogenase family. Class-III subfamily. Homodimer. Zn(2+) serves as cofactor.

It localises to the cytoplasm. It catalyses the reaction a primary alcohol + NAD(+) = an aldehyde + NADH + H(+). The catalysed reaction is a secondary alcohol + NAD(+) = a ketone + NADH + H(+). The enzyme catalyses S-(hydroxymethyl)glutathione + NADP(+) = S-formylglutathione + NADPH + H(+). It carries out the reaction S-(hydroxymethyl)glutathione + NAD(+) = S-formylglutathione + NADH + H(+). It catalyses the reaction 20-oxo-(5Z,8Z,11Z,14Z)-eicosatetraenoate + NAD(+) + H2O = (5Z,8Z,11Z,14Z)-eicosatetraenedioate + NADH + 2 H(+). The catalysed reaction is 20-hydroxy-(5Z,8Z,11Z,14Z)-eicosatetraenoate + NAD(+) = 20-oxo-(5Z,8Z,11Z,14Z)-eicosatetraenoate + NADH + H(+). The enzyme catalyses S-nitrosoglutathione + NADH + H(+) = S-(hydroxysulfenamide)glutathione + NAD(+). In terms of biological role, catalyzes the oxidation of long-chain primary alcohols and the oxidation of S-(hydroxymethyl) glutathione. Also oxidizes long chain omega-hydroxy fatty acids, such as 20-HETE, producing both the intermediate aldehyde, 20-oxoarachidonate and the end product, a dicarboxylic acid, (5Z,8Z,11Z,14Z)-eicosatetraenedioate. Class-III ADH is remarkably ineffective in oxidizing ethanol. Required for clearance of cellular formaldehyde, a cytotoxic and carcinogenic metabolite that induces DNA damage. Also acts as a S-nitroso-glutathione reductase by catalyzing the NADH-dependent reduction of S-nitrosoglutathione, thereby regulating protein S-nitrosylation. This Homo sapiens (Human) protein is Alcohol dehydrogenase class-3.